Consider the following 177-residue polypeptide: MSRVAKNPVKLPAGVEIKLAGQQLSIKGAKGALELKVHPSVEVIQDSGELRFAARNGDQQTRAMAGTTRALVNNMVVGVSQGFERKLQLVGVGYKAQAKGQVLSLSLGFSHPVDYELPAGIVAETPSQTDILIKGIDKQLVGQVAAEIRDFRPPEPYKGKGVRYADEVVRRKEAKKK.

It belongs to the universal ribosomal protein uL6 family. Part of the 50S ribosomal subunit.

Functionally, this protein binds to the 23S rRNA, and is important in its secondary structure. It is located near the subunit interface in the base of the L7/L12 stalk, and near the tRNA binding site of the peptidyltransferase center. The chain is Large ribosomal subunit protein uL6 from Pseudomonas paraeruginosa (strain DSM 24068 / PA7) (Pseudomonas aeruginosa (strain PA7)).